The chain runs to 51 residues: MKKIIICVILLAIMLLAACQVNNVRDTGGGSVSPSSIVTGVSMGSDGVGNP.

Positions 1-18 (MKKIIICVILLAIMLLAA) are cleaved as a signal peptide. The N-palmitoyl cysteine moiety is linked to residue Cys19. The S-diacylglycerol cysteine moiety is linked to residue Cys19. Residues 27-51 (TGGGSVSPSSIVTGVSMGSDGVGNP) are disordered.

The protein resides in the cell outer membrane. Its function is as follows. Lysis proteins are required for both colicin release and partial cell lysis. The chain is Lysis protein for colicin A (cal) from Citrobacter freundii.